A 113-amino-acid polypeptide reads, in one-letter code: MFYLTFLLFGAICIGQIQLGQPVKFKVNEDGHRPSVYPIKYRVCGWEIFARYLAICHIRQRRRKRSIEADIITDKDTANSYFNRVKRGSGRFNIVEECCLEGCIPEEIREYCP.

An N-terminal signal peptide occupies residues 1–22 (MFYLTFLLFGAICIGQIQLGQP). Residues 23 to 42 (VKFKVNEDGHRPSVYPIKYR) constitute a propeptide that is removed on maturation. 3 cysteine pairs are disulfide-bonded: Cys44–Cys99, Cys56–Cys112, and Cys98–Cys103. The propeptide at 62 to 87 (RRKRSIEADIITDKDTANSYFNRVKR) is c peptide.

It belongs to the insulin family.

The protein resides in the secreted. In terms of biological role, insulin decreases blood glucose concentration. May have evolved to activate insulin receptors (INSR) in vertebrates. Molecular docking studies reveals unique interaction with the human insulin receptor. In vivo, insulin-like peptide injection reduces blood glucose levels in two models of zebrafish diabetes (streptozotocin- and glucose-induced). Also shorter swimming distance of zebrafish larvae, an effect which is not observed with human insulin. In Exaiptasia diaphana (Tropical sea anemone), this protein is Insulin-like peptide 02.